Reading from the N-terminus, the 369-residue chain is Tryptophan 2,3-dioxygenase 2 (369 aa).

Residues 36–40 (FIVVH) and R107 each bind substrate. H303 contributes to the heme binding site. A substrate-binding site is contributed by T317.

Belongs to the tryptophan 2,3-dioxygenase family. As to quaternary structure, homotetramer. Heme serves as cofactor.

The enzyme catalyses L-tryptophan + O2 = N-formyl-L-kynurenine. It participates in amino-acid degradation; L-tryptophan degradation via kynurenine pathway; L-kynurenine from L-tryptophan: step 1/2. Heme-dependent dioxygenase that catalyzes the oxidative cleavage of the L-tryptophan (L-Trp) pyrrole ring and converts L-tryptophan to N-formyl-L-kynurenine. Catalyzes the oxidative cleavage of the indole moiety. In Ralstonia nicotianae (strain ATCC BAA-1114 / GMI1000) (Ralstonia solanacearum), this protein is Tryptophan 2,3-dioxygenase 2.